Reading from the N-terminus, the 154-residue chain is Nuclear cap-binding protein subunit 2-A (154 aa).

MRNA-binding positions include Tyr-10, Tyr-33, 102-106, 113-117, and 123-124; these read RVDWD, RQYGR, and QV. The region spanning 30-108 is the RRM domain; the sequence is STLYVGNLSF…RLIRVDWDAG (79 aa).

Belongs to the RRM NCBP2 family. As to quaternary structure, component of the nuclear cap-binding complex (CBC), a heterodimer composed of Cbp80 and Cbp20 that interacts with m7GpppG-capped RNA. Interacts with Ars2.

It localises to the nucleus. Its function is as follows. Component of the cap-binding complex (CBC), which binds co-transcriptionally to the 5' cap of pre-mRNAs and is involved in various processes such as pre-mRNA splicing and RNA-mediated gene silencing (RNAi). The CBC complex is involved in miRNA-mediated RNA interference via its interaction with Ars2 and is required for primary microRNAs (miRNAs) processing. Also involved in innate immunity via the short interfering RNAs (siRNAs) processing machinery by restricting the viral RNA production. In the CBC complex, Cbp20 recognizes and binds capped RNAs (m7GpppG-capped RNA) but requires Cbp80 to stabilize the movement of its N-terminal loop and lock the CBC into a high affinity cap-binding state with the cap structure. This chain is Nuclear cap-binding protein subunit 2-A (Cbp20-A), found in Drosophila virilis (Fruit fly).